Consider the following 324-residue polypeptide: NADH-cytochrome b5 reductase 2 (324 aa).

Residues 31 to 47 form a helical membrane-spanning segment; that stretch reads IPLIGGITLAAGAGYYY. Positions 70–178 constitute an FAD-binding FR-type domain; sequence QGWIGLKLAH…KGPLPKYPWE (109 aa). 181–216 contacts FAD; it reads KHDHICLIAGGTGITPMYQLVRKIFSNPEDKTKVTL.

Belongs to the flavoprotein pyridine nucleotide cytochrome reductase family. FAD serves as cofactor.

Its subcellular location is the mitochondrion outer membrane. It catalyses the reaction 2 Fe(III)-[cytochrome b5] + NADH = 2 Fe(II)-[cytochrome b5] + NAD(+) + H(+). May mediate the reduction of outer membrane cytochrome b5. The polypeptide is NADH-cytochrome b5 reductase 2 (MCR1) (Ajellomyces capsulatus (strain NAm1 / WU24) (Darling's disease fungus)).